The primary structure comprises 65 residues: Large ribosomal subunit protein bL35 (65 aa).

A compositionally biased stretch (basic residues) spans Met-1–Arg-16. The disordered stretch occupies residues Met-1–Gly-21.

It belongs to the bacterial ribosomal protein bL35 family.

The protein is Large ribosomal subunit protein bL35 of Streptococcus pyogenes serotype M18 (strain MGAS8232).